The following is a 219-amino-acid chain: Octanoyltransferase (219 aa).

The BPL/LPL catalytic domain maps to 32 to 207 (ENSQDEIWIV…TLSQELGLDK (176 aa)). Substrate-binding positions include 71–78 (RGGQVTYH), 138–140 (SLG), and 151–153 (GLA). Cysteine 169 acts as the Acyl-thioester intermediate in catalysis.

It belongs to the LipB family.

It localises to the cytoplasm. It catalyses the reaction octanoyl-[ACP] + L-lysyl-[protein] = N(6)-octanoyl-L-lysyl-[protein] + holo-[ACP] + H(+). The protein operates within protein modification; protein lipoylation via endogenous pathway; protein N(6)-(lipoyl)lysine from octanoyl-[acyl-carrier-protein]: step 1/2. Its function is as follows. Catalyzes the transfer of endogenously produced octanoic acid from octanoyl-acyl-carrier-protein onto the lipoyl domains of lipoate-dependent enzymes. Lipoyl-ACP can also act as a substrate although octanoyl-ACP is likely to be the physiological substrate. The sequence is that of Octanoyltransferase from Shewanella halifaxensis (strain HAW-EB4).